Consider the following 603-residue polypeptide: Elongation factor 4 (603 aa).

The region spanning 2–184 (NHIRNFSIIA…AIVHKMPAPR (183 aa)) is the tr-type G domain. GTP-binding positions include 14-19 (DHGKST) and 131-134 (NKMD).

Belongs to the TRAFAC class translation factor GTPase superfamily. Classic translation factor GTPase family. LepA subfamily.

The protein localises to the cell inner membrane. It carries out the reaction GTP + H2O = GDP + phosphate + H(+). Required for accurate and efficient protein synthesis under certain stress conditions. May act as a fidelity factor of the translation reaction, by catalyzing a one-codon backward translocation of tRNAs on improperly translocated ribosomes. Back-translocation proceeds from a post-translocation (POST) complex to a pre-translocation (PRE) complex, thus giving elongation factor G a second chance to translocate the tRNAs correctly. Binds to ribosomes in a GTP-dependent manner. In Variovorax paradoxus (strain S110), this protein is Elongation factor 4.